Here is a 1203-residue protein sequence, read N- to C-terminus: Probable phospholipid-transporting ATPase 11 (1203 aa).

Residues 1-71 (MTKCRRRRLH…STKYTLASFI (71 aa)) lie on the Cytoplasmic side of the membrane. Residues 72–93 (PKSLFEQFRRVANFYFLVTGVL) traverse the membrane as a helical segment. Over 94 to 97 (SLTA) the chain is Extracellular. A helical transmembrane segment spans residues 98-120 (LSPYSPISALLPLTFVIAASMVK). Topologically, residues 121-303 (EAIEDWGRKK…SRIERKMDKI (183 aa)) are cytoplasmic. A helical transmembrane segment spans residues 304–325 (IYLMFGVVFLMSFIGSIVFGIE). The Extracellular segment spans residues 326–363 (TREDRVRNGGRTERWYLRPDNADIFFDPDRAPMAAVYH). A helical membrane pass occupies residues 364–381 (FFTAVMLYSYFIPISLYV). The Cytoplasmic portion of the chain corresponds to 382 to 921 (SIEIVKVLQS…HGHWCYSRIS (540 aa)). D429 (4-aspartylphosphate intermediate) is an active-site residue. Mg(2+) is bound by residues D866 and D870. A helical transmembrane segment spans residues 922-941 (SMICYFFYKNITFGVTVFLY). The Extracellular portion of the chain corresponds to 942 to 955 (EAYTSFSAQPAYND). Residues 956-975 (WFLSLFNVFFSSLPVIALGV) traverse the membrane as a helical segment. At 976-1005 (FDQDVSARYCYKFPLLYQEGVQNLLFSWKR) the chain is on the cytoplasmic side. A helical transmembrane segment spans residues 1006–1028 (IIGWMFNGVFTALAIFFLCKESL). Topologically, residues 1029–1041 (KHQLYNPNGKTAG) are extracellular. A helical transmembrane segment spans residues 1042–1064 (REILGGTMYTCVVWVVNLQMALA). The Cytoplasmic segment spans residues 1065–1070 (ISYFTW). A helical transmembrane segment spans residues 1071–1091 (LQHIVIWGSVAFWYIFLMIYG). The Extracellular segment spans residues 1092–1108 (AITPSFSTDAYKVFIEA). The chain crosses the membrane as a helical span at residues 1109-1133 (LAPAPSYWLTTLFVMFFALIPFFVF). Residues 1134-1203 (KSVQMRFFPG…DQLNKNFIAF (70 aa)) lie on the Cytoplasmic side of the membrane.

Belongs to the cation transport ATPase (P-type) (TC 3.A.3) family. Type IV subfamily.

The protein localises to the membrane. It catalyses the reaction ATP + H2O + phospholipidSide 1 = ADP + phosphate + phospholipidSide 2.. Its function is as follows. Involved in transport of phospholipids. The chain is Probable phospholipid-transporting ATPase 11 from Arabidopsis thaliana (Mouse-ear cress).